Here is a 646-residue protein sequence, read N- to C-terminus: MSKTRVYQIAEELNISNEELINKLAELDINVTDKDSVLEGEELELALEMLGEDLSQENGNVIEIDGKLTVQVLATKLDKSPSEIIMKLMKMGTMATINQEISFEIAALAAKDYGFELTVAESDDTEALEIEALMEIEEDKEEDLKPRPPVVTVMGHVDHGKTSLLDAIRKTDVISGEAGGITQHIGASEVKINGHKIVFLDTPGHEAFTSMRARGAQVTDIAILVVAADDGIMPQTVEAINHAKAAGVPLIVAINKIDKPGANPDKVKQELADQGLLVEDWGGEVIAVPVSAKKKEGIDTLLEMVLLVAEMEELRANPNKRAVGTVIEAELDKGRGPVATVLVQGGTLTVGDPIVAGVACGKVRAMINAKGKRVKTAGPSTAVEILGLSEVPQGGDQFVEVPTDKIARSVAARRQQIVRDEMLKSTQRLSLDALFSQMSEGSIKDLNIVIKADVQGSVQAVKQSLEKLSNEEVQVKVIHGGVGAVTESDILLAAASNAIIIGFNVRPVPGAESLGEKENVDIRTYTIIYKAIEDIQAAMTGMLDPEYVDEETGKAEIREIYKISGVGTVAGCYVTNGKIFRNCKVRLVRDSIIIHEGELAALKRFKDDVKEVNSGYECGMSFVNYNDIKEGDIVEAYITKEVERKL.

The 170-residue stretch at Pro146 to Arg315 folds into the tr-type G domain. The tract at residues Gly155–Thr162 is G1. A GTP-binding site is contributed by Gly155–Thr162. The G2 stretch occupies residues Gly180–His184. The interval Asp201–Gly204 is G3. GTP-binding positions include Asp201–His205 and Asn255–Asp258. The segment at Asn255 to Asp258 is G4. The G5 stretch occupies residues Ser291–Lys293.

This sequence belongs to the TRAFAC class translation factor GTPase superfamily. Classic translation factor GTPase family. IF-2 subfamily.

It localises to the cytoplasm. In terms of biological role, one of the essential components for the initiation of protein synthesis. Protects formylmethionyl-tRNA from spontaneous hydrolysis and promotes its binding to the 30S ribosomal subunits. Also involved in the hydrolysis of GTP during the formation of the 70S ribosomal complex. The polypeptide is Translation initiation factor IF-2 (Clostridioides difficile (strain 630) (Peptoclostridium difficile)).